Here is a 500-residue protein sequence, read N- to C-terminus: MLNVNFTNGELLNTQGLVVFIDEQLKLDSNLITLDQQHHGLISKTIADKLQFTGKYGQIKVIPSVIKSGEIKYLIIAGLGTEEKLTEAKVEELGGKILQYATSAKISTISLKIINRISRFTSQTFASLVASGAFLASYRFDKYRTNLKEAEKFAVESIEVFTDNNTEAAKLFEVKKLVAEAVFFTRDISNEPSNIKTPQVYAERIVDILEPLGVDVDIIGEREMKNLGMGALLGVGQGSQNESKLVVMEYKGGSKYPTIALVGKGVIFDTGGISLKPSSNMHLMRYDMGGSAAVVGSMIAVAGQKLPVNIVGVVGLVENMLSGNAQRPGDVVTTMSGQTVEVLNTDAEGRLVLADAVWYAQEKFKPKCLIDVATLTGAITVALGSTYAGCFSNNDELASKLIKAGEEVNEKLWRMPLHDEYDAMIGSDIADMANISNIPRAAGSCIAAHFIKRFIKDGVDWAHLDIAGVANSNKVSSLGPKGAVGYGVRLLEKFIKEYNR.

2 residues coordinate Mn(2+): lysine 264 and aspartate 269. Lysine 276 is an active-site residue. Aspartate 287, aspartate 346, and glutamate 348 together coordinate Mn(2+). Residue arginine 350 is part of the active site.

Belongs to the peptidase M17 family. It depends on Mn(2+) as a cofactor.

Its subcellular location is the cytoplasm. It carries out the reaction Release of an N-terminal amino acid, Xaa-|-Yaa-, in which Xaa is preferably Leu, but may be other amino acids including Pro although not Arg or Lys, and Yaa may be Pro. Amino acid amides and methyl esters are also readily hydrolyzed, but rates on arylamides are exceedingly low.. The catalysed reaction is Release of an N-terminal amino acid, preferentially leucine, but not glutamic or aspartic acids.. Functionally, presumably involved in the processing and regular turnover of intracellular proteins. Catalyzes the removal of unsubstituted N-terminal amino acids from various peptides. This chain is Probable cytosol aminopeptidase, found in Rickettsia canadensis (strain McKiel).